The sequence spans 217 residues: MSSITAKLVKDLRDKTGAGMMDCKKALAETSGDISKAVEWLRQKGIASAEKKSGRVAAEGAIGSYIHTGSRVGVLIELNCETDFVARGELFQGLLRDVSMQVAACPNVEYVAVDDIPKDIVDKEKNIEMGRDDLAGKPEQIKTKIVEGRIGKRLKELALIEQPFIRDSSITVEQLVKQVAGQIGENVKVRRFTRYTLGEGIEVEESDFAAEVASMSS.

Positions 82 to 85 (TDFV) are involved in Mg(2+) ion dislocation from EF-Tu.

This sequence belongs to the EF-Ts family.

It is found in the cytoplasm. Functionally, associates with the EF-Tu.GDP complex and induces the exchange of GDP to GTP. It remains bound to the aminoacyl-tRNA.EF-Tu.GTP complex up to the GTP hydrolysis stage on the ribosome. This Prochlorococcus marinus (strain SARG / CCMP1375 / SS120) protein is Elongation factor Ts.